The sequence spans 964 residues: E3 ubiquitin-protein ligase TRIM37 (964 aa).

Position 1 is an N-acetylmethionine (Met1). Residues 15–55 form an RING-type; degenerate zinc finger; the sequence is CFICMEKLRDARLCPHCSKLCCFSCIRRWLTEQRAQCPHCR. Residues 90-132 form a B box-type zinc finger; it reads NEKDKCENHHEKLSVFCWTCKKCICHQCALWGGMHGGHTFKPL. Positions 95, 98, 117, and 124 each coordinate Zn(2+). The stretch at 132 to 234 forms a coiled coil; that stretch reads LAEIYEQHVT…VEHQLRSCSK (103 aa). In terms of domain architecture, MATH spans 276–403; that stretch reads YDSATFVLEN…NDTVILRFQV (128 aa). The stretch at 419 to 450 forms a coiled coil; the sequence is ITQLEAAQTSYIQQINNLKERLTIELSRTQKS. Position 454 is a phosphoserine (Ser454). Disordered regions lie at residues 477–513, 530–554, and 640–663; these read CSDM…HHEL, QLDG…IDEE, and RPPA…RKQQ. Over residues 503–513 the composition is skewed to basic and acidic residues; the sequence is KIQNEDYHHEL. Over residues 534 to 544 the composition is skewed to low complexity; the sequence is SSSSASSTATS. The stretch at 673 to 700 forms a coiled coil; sequence KMLKRLKTQMAEVRCMKTDVKNTLSEIK. The segment covering 752–761 has biased composition (polar residues); sequence NSTNKKSNSP. Disordered regions lie at residues 752–812 and 891–964; these read NSTN…SPRA and GASA…NSGR. The segment covering 776 to 788 has biased composition (basic and acidic residues); the sequence is RAVDPGENSRSKG. A compositionally biased stretch (low complexity) spans 794-807; sequence SEGSPGSSQSGSRH. Positions 904-916 are enriched in acidic residues; sequence SDIECDTENEEQE. Positions 955-964 are enriched in polar residues; that stretch reads SFNTDENSGR.

This sequence belongs to the TRIM/RBCC family. In terms of assembly, associates with the PRC2/EED-EZH2 complex. In terms of processing, auto-ubiquitinated. As to expression, ubiquitous. Highly expressed in testis, while it is weakly expressed in other tissues.

It is found in the chromosome. The protein resides in the cytoplasm. The protein localises to the perinuclear region. Its subcellular location is the peroxisome membrane. The catalysed reaction is S-ubiquitinyl-[E2 ubiquitin-conjugating enzyme]-L-cysteine + [acceptor protein]-L-lysine = [E2 ubiquitin-conjugating enzyme]-L-cysteine + N(6)-ubiquitinyl-[acceptor protein]-L-lysine.. It participates in protein modification; protein ubiquitination. Functionally, E3 ubiquitin-protein ligase required to prevent centriole reduplication. Probably acts by ubiquitinating positive regulators of centriole reduplication. Mediates monoubiquitination of 'Lys-119' of histone H2A (H2AK119Ub), a specific tag for epigenetic transcriptional repression: associates with some Polycomb group (PcG) multiprotein PRC2-like complex and mediates repression of target genes. Also acts as a positive regulator of peroxisome import by mediating monoubiquitination of PEX5 at 'Lys-472': monoubiquitination promotes PEX5 stabilitation by preventing its polyubiquitination and degradation by the proteasome. Has anti-HIV activity. The polypeptide is E3 ubiquitin-protein ligase TRIM37 (Homo sapiens (Human)).